A 318-amino-acid chain; its full sequence is Ribonuclease Z (318 aa).

Residues histidine 62, histidine 64, aspartate 66, histidine 67, histidine 139, aspartate 210, and histidine 268 each contribute to the Zn(2+) site. Aspartate 66 acts as the Proton acceptor in catalysis.

It belongs to the RNase Z family. Homodimer. Requires Zn(2+) as cofactor.

It catalyses the reaction Endonucleolytic cleavage of RNA, removing extra 3' nucleotides from tRNA precursor, generating 3' termini of tRNAs. A 3'-hydroxy group is left at the tRNA terminus and a 5'-phosphoryl group is left at the trailer molecule.. Functionally, zinc phosphodiesterase, which displays some tRNA 3'-processing endonuclease activity. Probably involved in tRNA maturation, by removing a 3'-trailer from precursor tRNA. The protein is Ribonuclease Z of Gloeothece citriformis (strain PCC 7424) (Cyanothece sp. (strain PCC 7424)).